Consider the following 133-residue polypeptide: ATP synthase epsilon chain, chloroplastic (133 aa).

This sequence belongs to the ATPase epsilon chain family. In terms of assembly, F-type ATPases have 2 components, CF(1) - the catalytic core - and CF(0) - the membrane proton channel. CF(1) has five subunits: alpha(3), beta(3), gamma(1), delta(1), epsilon(1). CF(0) has three main subunits: a, b and c.

The protein resides in the plastid. It localises to the chloroplast thylakoid membrane. Functionally, produces ATP from ADP in the presence of a proton gradient across the membrane. The protein is ATP synthase epsilon chain, chloroplastic of Phaeodactylum tricornutum (strain CCAP 1055/1).